The following is a 331-amino-acid chain: MKQTVYIASPESQQIHVWNLNHEGALTLTQVVDVPGQVQPMVVSPDKRYLYVGVRPEFRVLAYRIAPDDGALTFAAESALPGSPTHISTDHQGQFVFVGSYNAGNVSVTRLEDGLPVGVVDVVEGLDGCHSANISPDNRTLWVPALKQDRICLFTVSDDGHLVAQDPAEVTTVEGAGPRHMVFHPNEQYAYCVNELNSSVDVWELKDPHGNIECVQTLDMMPENFSDTCWAADIHITPDGRHLYACDRTASLITVFSVSEDGSVLSKEGFQPTETQPRGFNVDHSGKYLIVAGQKSHHISVYEIVGEQGLLHEKGRYAVGQGPMWVVVNAH.

K287 carries the post-translational modification N6-acetyllysine.

It belongs to the cycloisomerase 2 family.

The catalysed reaction is 6-phospho-D-glucono-1,5-lactone + H2O = 6-phospho-D-gluconate + H(+). It functions in the pathway carbohydrate degradation; pentose phosphate pathway; D-ribulose 5-phosphate from D-glucose 6-phosphate (oxidative stage): step 2/3. In terms of biological role, catalyzes the hydrolysis of 6-phosphogluconolactone to 6-phosphogluconate. This is 6-phosphogluconolactonase from Shigella sonnei (strain Ss046).